A 466-amino-acid polypeptide reads, in one-letter code: 5-hydroxytryptamine receptor (466 aa).

The disordered stretch occupies residues 1–21; it reads MNASRLPGFNDTSQDQPYPTS. Residues 1–66 are Extracellular-facing; that stretch reads MNASRLPGFN…TSFVLMAVTS (66 aa). Residues asparagine 2, asparagine 10, asparagine 29, asparagine 41, asparagine 45, and asparagine 50 are each glycosylated (N-linked (GlcNAc...) asparagine). The segment covering 10–21 has biased composition (polar residues); the sequence is NDTSQDQPYPTS. A helical transmembrane segment spans residues 67-89; it reads VVLALIILATIVGNVFVIAAIII. Residues 90–99 lie on the Cytoplasmic side of the membrane; it reads ERNLQNVANY. Residues 100–121 form a helical membrane-spanning segment; it reads LVASLAVADLMVACLVMPLGAV. The Extracellular segment spans residues 122-136; sequence YEVSQGWILGPELCD. The cysteines at positions 135 and 215 are disulfide-linked. The helical transmembrane segment at 137 to 158 threads the bilayer; that stretch reads MWTSSDVLCSSASILHLVAIAT. Topologically, residues 159–177 are cytoplasmic; that stretch reads DRYWAVTDVDYIHIRNEKR. Residues 178–200 traverse the membrane as a helical segment; the sequence is IFTMIVLVWGAALVVSLAPQLGW. Topologically, residues 201 to 228 are extracellular; the sequence is KDPDYLARITQQQKCLVSQDLAYQIFAT. A helical transmembrane segment spans residues 229–250; sequence MSTFYVPLAVILILYWKIFQTA. Residues 251-386 are Cytoplasmic-facing; the sequence is RRRIRRRRDP…AKRERKAAKT (136 aa). Disordered stretches follow at residues 255-282 and 339-360; these read RRRRDPPPPRPTSADGATPSGRPVQSAR and VPPSVSPEKSSSTVTNGSKPER. A compositionally biased stretch (low complexity) spans 339–353; the sequence is VPPSVSPEKSSSTVT. Residues 387-410 traverse the membrane as a helical segment; the sequence is LAIITGAFVFCWLPFFIMALVMPI. The Extracellular portion of the chain corresponds to 411 to 419; it reads CQTCVISDY. Residues 420–442 form a helical membrane-spanning segment; that stretch reads LASFFLWLGYFNSTLNPVIYTIF. Over 443–466 the chain is Cytoplasmic; it reads SPDFRQAFARILFGTHRRRRYKKF.

The protein belongs to the G-protein coupled receptor 1 family.

It localises to the cell membrane. This is a receptor for 5-hydroxytryptamine (serotonin), a biogenic hormone that function as a neurotransmitter, a hormone, and a mitogen. The polypeptide is 5-hydroxytryptamine receptor (Heliothis virescens (Tobacco budworm moth)).